The primary structure comprises 360 residues: Variable large protein 18 (360 aa).

The first 26 residues, 1–26 (MRKRISAIINKLNISIMMMIVVLMIG), serve as a signal peptide directing secretion. Residue cysteine 27 is the site of N-palmitoyl cysteine attachment. Cysteine 27 is lipidated: S-diacylglycerol cysteine.

It belongs to the variable large protein (Vlp) family. Alpha subfamily.

It localises to the cell outer membrane. In terms of biological role, the Vlp and Vsp proteins are antigenically distinct proteins, only one vlp or vsp gene is transcriptionally active at any one time. Switching between these genes is a mechanism of host immune response evasion. The polypeptide is Variable large protein 18 (Borrelia hermsii).